Reading from the N-terminus, the 376-residue chain is Cysteine proteinase 2 (376 aa).

The signal sequence occupies residues 1-18 (MRLLVFLILLIFVNFSFA). Positions 19–122 (NVRPNGRRFS…EVLNVEDLQT (104 aa)) are cleaved as a propeptide — activation peptide. Disulfide bonds link C144/C187, C178/C221, and C279/C365. C147 is an active-site residue. Catalysis depends on residues H286 and N343.

This sequence belongs to the peptidase C1 family.

The protein resides in the lysosome. Cysteine proteinases 1 and 2 are believed to participate in the breakdown of protein during differentiation of Dictyostelium as a response to starvation. The protein is Cysteine proteinase 2 (cprB) of Dictyostelium discoideum (Social amoeba).